The primary structure comprises 516 residues: Cytochrome P450 monooxygenase asR2 (516 aa).

The helical transmembrane segment at Leu9–Ile29 threads the bilayer. N-linked (GlcNAc...) asparagine glycosylation is found at Asn248 and Asn273. Cys461 lines the heme pocket.

The protein belongs to the cytochrome P450 family. Heme serves as cofactor.

It is found in the membrane. The protein operates within secondary metabolite biosynthesis; terpenoid biosynthesis. In terms of biological role, cytochrome P450 monooxygenase; part of the gene cluster that mediates the biosynthesis of xenovulene A, an unusual meroterpenoid that has potent inhibitory effects on the human gamma-aminobutyrate A (GABAA) benzodiazepine receptor. The first step of xenovulene A biosynthesis is the biosynthesis of 3-methylorcinaldehyde performed by the non-reducing polyketide synthase aspks1. The salicylate hydroxylase asL1 then catalyzes the oxidative dearomatization of 3-methylorcinaldehyde to yield a dearomatized hydroxycyclohexadione. The 2-oxoglutarate-dependent dioxygenase asL3 further catalyzes the oxidative ring expansion to provide the first tropolone metabolite. The cytochrome P450 monooxygenase asR2 allows the synthesis of tropolone hemiacetal. In parallel, a previously unrecognised class of terpene cyclase, asR6, produces alpha-humulene from farnesylpyrophosphate (FPP). The putative Diels-Alderase asR5 probably catalyzes the formation of the tropolone-humulene skeleton by linking humulene and the polyketide moiety. Oxidative-ring contractions catalyzed by asL4 and asL6 then processively remove carbon atoms from the polyketide to yield xenovulene A. This chain is Cytochrome P450 monooxygenase asR2, found in Sarocladium schorii (Acremonium strictum (strain IMI 501407)).